Here is a 303-residue protein sequence, read N- to C-terminus: 2-dehydropantoate 2-reductase (303 aa).

NADP(+)-binding positions include 7 to 12, N98, and A122; that span reads GCGALG. N98 is a binding site for substrate. Catalysis depends on K176, which acts as the Proton donor. Substrate-binding residues include N180, N184, N194, and S244. E256 contacts NADP(+).

Belongs to the ketopantoate reductase family.

The protein localises to the cytoplasm. The enzyme catalyses (R)-pantoate + NADP(+) = 2-dehydropantoate + NADPH + H(+). It participates in cofactor biosynthesis; (R)-pantothenate biosynthesis; (R)-pantoate from 3-methyl-2-oxobutanoate: step 2/2. Functionally, catalyzes the NADPH-dependent reduction of ketopantoate into pantoic acid. The chain is 2-dehydropantoate 2-reductase (panE) from Yersinia pestis.